The following is a 204-amino-acid chain: Small ribosomal subunit protein uS4 (204 aa).

The segment at Met1–Ser46 is disordered. Positions Arg94 to Gln157 constitute an S4 RNA-binding domain.

It belongs to the universal ribosomal protein uS4 family. In terms of assembly, part of the 30S ribosomal subunit. Contacts protein S5. The interaction surface between S4 and S5 is involved in control of translational fidelity.

In terms of biological role, one of the primary rRNA binding proteins, it binds directly to 16S rRNA where it nucleates assembly of the body of the 30S subunit. Its function is as follows. With S5 and S12 plays an important role in translational accuracy. This chain is Small ribosomal subunit protein uS4, found in Zymomonas mobilis subsp. mobilis (strain ATCC 31821 / ZM4 / CP4).